A 231-amino-acid chain; its full sequence is Large ribosomal subunit protein uL1 (231 aa).

It belongs to the universal ribosomal protein uL1 family. Part of the 50S ribosomal subunit.

Binds directly to 23S rRNA. The L1 stalk is quite mobile in the ribosome, and is involved in E site tRNA release. Its function is as follows. Protein L1 is also a translational repressor protein, it controls the translation of the L11 operon by binding to its mRNA. This Staphylococcus haemolyticus (strain JCSC1435) protein is Large ribosomal subunit protein uL1.